Consider the following 56-residue polypeptide: MSKTIVRKNESIDDALRRFKRAVSKTGTLQEVRKREFYEKPSVRRKKKSEAARKRK.

It belongs to the bacterial ribosomal protein bS21 family.

The sequence is that of Small ribosomal subunit protein bS21 (rpsU) from Geobacillus stearothermophilus (Bacillus stearothermophilus).